We begin with the raw amino-acid sequence, 306 residues long: Pyridoxal 5'-phosphate synthase subunit PdxS (306 aa).

A D-ribose 5-phosphate-binding site is contributed by aspartate 36. The Schiff-base intermediate with D-ribose 5-phosphate role is filled by lysine 93. Glycine 165 lines the D-ribose 5-phosphate pocket. Arginine 177 lines the D-glyceraldehyde 3-phosphate pocket. D-ribose 5-phosphate is bound by residues glycine 226 and 247 to 248; that span reads GS.

The protein belongs to the PdxS/SNZ family. As to quaternary structure, in the presence of PdxT, forms a dodecamer of heterodimers.

It catalyses the reaction aldehydo-D-ribose 5-phosphate + D-glyceraldehyde 3-phosphate + L-glutamine = pyridoxal 5'-phosphate + L-glutamate + phosphate + 3 H2O + H(+). It participates in cofactor biosynthesis; pyridoxal 5'-phosphate biosynthesis. Its function is as follows. Catalyzes the formation of pyridoxal 5'-phosphate from ribose 5-phosphate (RBP), glyceraldehyde 3-phosphate (G3P) and ammonia. The ammonia is provided by the PdxT subunit. Can also use ribulose 5-phosphate and dihydroxyacetone phosphate as substrates, resulting from enzyme-catalyzed isomerization of RBP and G3P, respectively. This is Pyridoxal 5'-phosphate synthase subunit PdxS from Nocardia farcinica (strain IFM 10152).